A 305-amino-acid polypeptide reads, in one-letter code: Ornithine carbamoyltransferase (305 aa).

Carbamoyl phosphate is bound by residues 52-55 (STRT), Gln-79, Arg-103, and 130-133 (HPLQ). Residues Asn-162, Asp-224, and 228-229 (SM) each bind L-ornithine. Residues 264–265 (CL) and Arg-292 each bind carbamoyl phosphate.

Belongs to the aspartate/ornithine carbamoyltransferase superfamily. OTCase family.

The protein localises to the cytoplasm. The catalysed reaction is carbamoyl phosphate + L-ornithine = L-citrulline + phosphate + H(+). The protein operates within amino-acid biosynthesis; L-arginine biosynthesis; L-arginine from L-ornithine and carbamoyl phosphate: step 1/3. Its function is as follows. Reversibly catalyzes the transfer of the carbamoyl group from carbamoyl phosphate (CP) to the N(epsilon) atom of ornithine (ORN) to produce L-citrulline. This Pyrobaculum islandicum (strain DSM 4184 / JCM 9189 / GEO3) protein is Ornithine carbamoyltransferase.